A 45-amino-acid chain; its full sequence is Photosystem II reaction center protein K (45 aa).

Positions methionine 1 to alanine 8 are excised as a propeptide. The chain crosses the membrane as a helical span at residues leucine 24–phenylalanine 44.

This sequence belongs to the PsbK family. As to quaternary structure, PSII is composed of 1 copy each of membrane proteins PsbA, PsbB, PsbC, PsbD, PsbE, PsbF, PsbH, PsbI, PsbJ, PsbK, PsbL, PsbM, PsbT, PsbX, PsbY, PsbZ, Psb30/Ycf12, peripheral proteins PsbO, CyanoQ (PsbQ), PsbU, PsbV and a large number of cofactors. It forms dimeric complexes.

The protein resides in the cellular thylakoid membrane. Functionally, one of the components of the core complex of photosystem II (PSII). PSII is a light-driven water:plastoquinone oxidoreductase that uses light energy to abstract electrons from H(2)O, generating O(2) and a proton gradient subsequently used for ATP formation. It consists of a core antenna complex that captures photons, and an electron transfer chain that converts photonic excitation into a charge separation. The sequence is that of Photosystem II reaction center protein K from Trichodesmium erythraeum (strain IMS101).